The primary structure comprises 102 residues: Large ribosomal subunit protein uL24 (102 aa).

Belongs to the universal ribosomal protein uL24 family. In terms of assembly, part of the 50S ribosomal subunit.

One of two assembly initiator proteins, it binds directly to the 5'-end of the 23S rRNA, where it nucleates assembly of the 50S subunit. Its function is as follows. One of the proteins that surrounds the polypeptide exit tunnel on the outside of the subunit. The chain is Large ribosomal subunit protein uL24 from Herpetosiphon aurantiacus (strain ATCC 23779 / DSM 785 / 114-95).